Here is a 549-residue protein sequence, read N- to C-terminus: Leiomodin-2 (549 aa).

The tract at residues 1–42 (MSTFGYRRGLSKYESIDEDELLASLTAEELKELERELEDIEP) is tropomyosin-binding. An interaction with tropomyosin alpha region spans residues 1–47 (MSTFGYRRGLSKYESIDEDELLASLTAEELKELERELEDIEPDRNLP). 3 interaction with actin regions span residues 1 to 164 (MSTF…PDNS), 165 to 499 (KPKT…KEIK), and 523 to 542 (AHENLMEAIRGSSIRQLRRV). 3 positions are modified to phosphoserine: serine 11, serine 15, and serine 24. Disordered regions lie at residues 91–166 (KLAE…NSKP), 179–200 (TNGNSGGTQRNTESPAAIHPCG), 358–455 (MDKQ…PGKK), and 469–534 (ESAQ…IRGS). Acidic residues-rich tracts occupy residues 95–105 (EDKEESEEELI) and 113–143 (VSEEVCTEEEEESTEEEEEEEEEDSEEEEVT). 2 stretches are compositionally biased toward polar residues: residues 150-163 (INGTVSHNGVNPDN) and 179-192 (TNGNSGGTQRNTES). Positions 358–376 (MDKQRQKRMQEQKQQEGHD) are enriched in basic and acidic residues. Over residues 390–401 (TPGSSPYASPRQ) the composition is skewed to polar residues. Serine 406 is modified (phosphoserine). Residues 420-452 (PPSPVAPPPPPPPPPLPPHMLPPPPPPPAPPLP) are compositionally biased toward pro residues. Residues 457–515 (ITRNIAEVIKQQESAQRALQNGQRKKKGKKVKKQPNNILKEIKNSLRSVQEKKMEESSR) are a coiled coil. A compositionally biased stretch (polar residues) spans 469-478 (ESAQRALQNG). Positions 479–489 (QRKKKGKKVKK) are enriched in basic residues. Residues 496–514 (KEIKNSLRSVQEKKMEESS) show a composition bias toward basic and acidic residues. In terms of domain architecture, WH2 spans 523–542 (AHENLMEAIRGSSIRQLRRV).

Belongs to the tropomodulin family. Can bind at least three actin monomers and thereby provides a nucleus for actin filament formation. Interacts (via N-terminus) with tropomyosin alpha (TPM1) (via N-terminus). May also interact with TPM2 (via N-terminus). Interacts with FLII.

The protein resides in the cytoplasm. It localises to the myofibril. It is found in the sarcomere. The protein localises to the m line. Its subcellular location is the cytoskeleton. Mediates nucleation of actin filaments and thereby promotes actin polymerization. Plays a role in the regulation of actin filament length. Required for normal sarcomere organization in the heart, and for normal heart function. This is Leiomodin-2 (Lmod2) from Rattus norvegicus (Rat).